Reading from the N-terminus, the 58-residue chain is Ribosome modulation factor (58 aa).

Positions 1–14 are enriched in basic residues; it reads MKRQKRDKLTRAHS. Positions 1–25 are disordered; it reads MKRQKRDKLTRAHSKGYQAGISGRS.

Belongs to the ribosome modulation factor family.

It localises to the cytoplasm. During stationary phase, converts 70S ribosomes to an inactive dimeric form (100S ribosomes). This Alteromonas naphthalenivorans protein is Ribosome modulation factor.